A 275-amino-acid polypeptide reads, in one-letter code: 4-deoxy-L-threo-5-hexosulose-uronate ketol-isomerase (275 aa).

Zn(2+) is bound by residues His-193, His-195, Glu-200, and His-242.

Belongs to the KduI family. It depends on Zn(2+) as a cofactor.

It carries out the reaction 5-dehydro-4-deoxy-D-glucuronate = 3-deoxy-D-glycero-2,5-hexodiulosonate. Its pathway is glycan metabolism; pectin degradation; 2-dehydro-3-deoxy-D-gluconate from pectin: step 4/5. In terms of biological role, catalyzes the isomerization of 5-dehydro-4-deoxy-D-glucuronate to 3-deoxy-D-glycero-2,5-hexodiulosonate. The sequence is that of 4-deoxy-L-threo-5-hexosulose-uronate ketol-isomerase from Bacillus pumilus (strain SAFR-032).